The following is a 487-amino-acid chain: Adenylosuccinate synthetase, chloroplastic (487 aa).

The transit peptide at Met-1 to Ser-46 directs the protein to the chloroplast. GTP contacts are provided by residues Gly-74–Lys-80 and Gly-102–Thr-104. Asp-75 serves as the catalytic Proton acceptor. Residues Asp-75 and Gly-102 each contribute to the Mg(2+) site. Residues Asp-75–Lys-78, Asn-100–His-103, Thr-192, Arg-206, Gln-286, Thr-301, and Arg-365 contribute to the IMP site. The active-site Proton donor is the His-103. Substrate is bound at residue Thr-361 to Arg-367. GTP contacts are provided by residues Arg-367, Lys-393 to Asp-395, and Gly-476 to Gly-478.

It belongs to the adenylosuccinate synthetase family. As to quaternary structure, homodimer. The cofactor is Mg(2+).

The protein resides in the plastid. Its subcellular location is the chloroplast. The enzyme catalyses IMP + L-aspartate + GTP = N(6)-(1,2-dicarboxyethyl)-AMP + GDP + phosphate + 2 H(+). It functions in the pathway purine metabolism; AMP biosynthesis via de novo pathway; AMP from IMP: step 1/2. Functionally, plays an important role in the de novo pathway and in the salvage pathway of purine nucleotide biosynthesis. Catalyzes the first committed step in the biosynthesis of AMP from IMP. This chain is Adenylosuccinate synthetase, chloroplastic, found in Oryza sativa subsp. indica (Rice).